The following is a 439-amino-acid chain: Packaging protein 1 (439 aa).

Residues 1–23 (MSTQIPARQETYDPSQSSGTKTP) show a composition bias toward polar residues. The disordered stretch occupies residues 1–42 (MSTQIPARQETYDPSQSSGTKTPSHPYDGNPTRSYPKRNAGK). 151 to 158 (GPTGSGKS) is a binding site for ATP. The interval 419–439 (ERNPKLTDLEKLSPPGTFQET) is DNA-binding.

This sequence belongs to the adenoviridae packaging protein 1 family. Homodimer. Part of a genome packaging complex composed of packaging proteins 1, 2 and 3; this complex specifically binds to the packaging sequence on the left end of viral genomic DNA and performs packaging of the viral genome. Interacts with protein 33K.

Its subcellular location is the virion. It is found in the host nucleus. The protein resides in the host nucleoplasm. The protein localises to the host nucleolus. Functionally, component of the packaging machinery which encapsidates the viral DNA into preformed capsids and transcriptional activator of the viral major late promoter (MLP). Binds, along with packaging proteins 2 and 3, to the specific packaging sequence on the left end of viral genomic DNA and displays ATPase activity thereby providing the power stroke of the packaging machinery. The activity of packaging protein IVa2 is stimulated by protein 33K which acts as a terminase. May be the protein that pumps DNA into the capsid powered by ATP hydrolysis. Specifically binds to the 5'-CG-3' nucleotides of the repeats making up the packaging sequence. Component of the DEF-A and DEF-B transcription factors that bind downstream elements of the major late promoter (MLP), and stimulate transcription from the MLP after initiation of viral DNA replication. DEF-A is a heterodimer packaging proteins 1 and 2 and DEF-B is a homodimer of packaging protein 1. This chain is Packaging protein 1, found in Fowl adenovirus A serotype 1 (strain CELO / Phelps) (FAdV-1).